Reading from the N-terminus, the 132-residue chain is L-ectoine synthase (132 aa).

It belongs to the ectoine synthase family.

The enzyme catalyses (2S)-4-acetamido-2-aminobutanoate = L-ectoine + H2O. The protein operates within amine and polyamine biosynthesis; ectoine biosynthesis; L-ectoine from L-aspartate 4-semialdehyde: step 3/3. In terms of biological role, catalyzes the circularization of gamma-N-acetyl-alpha,gamma-diaminobutyric acid (ADABA) to ectoine (1,4,5,6-tetrahydro-2-methyl-4-pyrimidine carboxylic acid), which is an excellent osmoprotectant. The protein is L-ectoine synthase of Bordetella avium (strain 197N).